The sequence spans 412 residues: UPF0754 membrane protein syc0451_d (412 aa).

2 consecutive transmembrane segments (helical) span residues 8–28 (LWLL…DLAI) and 390–410 (IGGV…VWSL).

This sequence belongs to the UPF0754 family.

Its subcellular location is the cell inner membrane. The sequence is that of UPF0754 membrane protein syc0451_d from Synechococcus sp. (strain ATCC 27144 / PCC 6301 / SAUG 1402/1) (Anacystis nidulans).